The chain runs to 364 residues: V-type proton ATPase subunit d (364 aa).

The protein belongs to the V-ATPase V0D/AC39 subunit family. As to quaternary structure, V-ATPase is a heteromultimeric enzyme composed of a peripheral catalytic V1 complex (components A to H) attached to an integral membrane V0 proton pore complex (components: a, c, c', c'', d, e, f and VOA1).

Its subcellular location is the vacuole membrane. Subunit of the V0 complex of vacuolar(H+)-ATPase (V-ATPase), a multisubunit enzyme composed of a peripheral complex (V1) that hydrolyzes ATP and a membrane integral complex (V0) that translocates protons. V-ATPase is responsible for acidifying and maintaining the pH of intracellular compartments. This subunit is a non-integral membrane component of the membrane pore domain and is required for proper assembly of the V0 sector. Might be involved in the regulated assembly of V1 subunits onto the membrane sector or alternatively may prevent the passage of protons through V0 pores. The chain is V-type proton ATPase subunit d from Neurospora crassa (strain ATCC 24698 / 74-OR23-1A / CBS 708.71 / DSM 1257 / FGSC 987).